We begin with the raw amino-acid sequence, 758 residues long: MTTLHFSGFPRVGAFRELKFAQEKYWRKEISEQELLDVAKDLREKNWKHQAAANADYVAVGDFTFYDHILDLQVATGAIPARFGFDSQNLPLEQFFQLARGNKDQFAIEMTKWFDTNYHYLVPEFHADTEFKANAKHYVQQLQEAQTLGLKAKPTVVGPLTFLWVGKEKGSVEFDRLSLLPKLLPVYVEILTALVEAGAEWIQIDEPALAVDLPKEWVEAYKDVYATLNKVSAKILLGTYFGSVAEHAALLKSLPVDGLHIDLVRAPEQLDAFAGYDKVLSAGVIDGRNIWRANLNKVLETVGPLQAKLGERLWISSSCSLLHTPFDLSVEEKLKANKPDLYSWLAFTLQKTQELRVLKAALNEGRDSVAEELAASQAAADSRANSSEIHRADVAKRLADLPVNAGQRKSPFADRIKAQQAWLNLPLLPTTNIGSFPQTTEIRQARAAFKKGELSASDYEAAMKKEIALVVEEQEKLDLDVLVHGEAERNDMVEYFGELLSGFAFTQYGWVQSYGSRCVKPPIIFGDVSRPEAMTVAWSTYAQNLTKRPMKGMLTGPVTILQWSFVRNDIPRATVCKQIALALNDEVLDLEKAGIKVIQIDEPAIREGLPLKRADWDAYLNWAGESFRLSSAGCEDSTQIHTHMCYSEFNDILPAIAAMDADVITIETSRSDMELLAAFGEFKYPNDIGPGVYDIHSPRVPTEAEVEHLLRKAIEVVPVERLWVNPDCGLKTRGWKETLEQLQVMMNVTRKLRAELAK.

Residues 16-19 and Lys112 each bind 5-methyltetrahydropteroyltri-L-glutamate; that span reads RELK. L-homocysteine contacts are provided by residues 433-435 and Glu486; that span reads IGS. Residues 433 to 435 and Glu486 each bind L-methionine; that span reads IGS. 5-methyltetrahydropteroyltri-L-glutamate contacts are provided by residues 517 to 518 and Trp563; that span reads RC. Asp601 provides a ligand contact to L-homocysteine. Residue Asp601 participates in L-methionine binding. Glu607 contacts 5-methyltetrahydropteroyltri-L-glutamate. Zn(2+) is bound by residues His643, Cys645, and Glu667. Residue His696 is the Proton donor of the active site. Cys728 is a Zn(2+) binding site.

This sequence belongs to the vitamin-B12 independent methionine synthase family. It depends on Zn(2+) as a cofactor.

It catalyses the reaction 5-methyltetrahydropteroyltri-L-glutamate + L-homocysteine = tetrahydropteroyltri-L-glutamate + L-methionine. It participates in amino-acid biosynthesis; L-methionine biosynthesis via de novo pathway; L-methionine from L-homocysteine (MetE route): step 1/1. Its function is as follows. Catalyzes the transfer of a methyl group from 5-methyltetrahydrofolate to homocysteine resulting in methionine formation. The protein is 5-methyltetrahydropteroyltriglutamate--homocysteine methyltransferase of Neisseria gonorrhoeae (strain ATCC 700825 / FA 1090).